The primary structure comprises 281 residues: Large ribosomal subunit protein uL2 (281 aa).

The disordered stretch occupies residues Val-220–Lys-281. Positions Lys-258 to Met-271 are enriched in basic residues. Basic and acidic residues predominate over residues Arg-272–Lys-281.

It belongs to the universal ribosomal protein uL2 family. In terms of assembly, part of the 50S ribosomal subunit. Forms a bridge to the 30S subunit in the 70S ribosome.

Its function is as follows. One of the primary rRNA binding proteins. Required for association of the 30S and 50S subunits to form the 70S ribosome, for tRNA binding and peptide bond formation. It has been suggested to have peptidyltransferase activity; this is somewhat controversial. Makes several contacts with the 16S rRNA in the 70S ribosome. The protein is Large ribosomal subunit protein uL2 of Lachnoclostridium phytofermentans (strain ATCC 700394 / DSM 18823 / ISDg) (Clostridium phytofermentans).